A 420-amino-acid polypeptide reads, in one-letter code: Phosphoribosylamine--glycine ligase (420 aa).

One can recognise an ATP-grasp domain in the interval 108 to 314; it reads KQFMEKYAIP…FAALIDALLH (207 aa). 134-195 contacts ATP; the sequence is LDERGVPIVI…EDFLAGEEFS (62 aa). Residues E284 and N286 each contribute to the Mg(2+) site.

This sequence belongs to the GARS family. Requires Mg(2+) as cofactor. The cofactor is Mn(2+).

The enzyme catalyses 5-phospho-beta-D-ribosylamine + glycine + ATP = N(1)-(5-phospho-beta-D-ribosyl)glycinamide + ADP + phosphate + H(+). It participates in purine metabolism; IMP biosynthesis via de novo pathway; N(1)-(5-phospho-D-ribosyl)glycinamide from 5-phospho-alpha-D-ribose 1-diphosphate: step 2/2. This is Phosphoribosylamine--glycine ligase from Listeria monocytogenes serotype 4b (strain F2365).